Here is a 126-residue protein sequence, read N- to C-terminus: Holo-[acyl-carrier-protein] synthase (126 aa).

Mg(2+) is bound by residues aspartate 8 and glutamate 57.

The protein belongs to the P-Pant transferase superfamily. AcpS family. Mg(2+) serves as cofactor.

Its subcellular location is the cytoplasm. The catalysed reaction is apo-[ACP] + CoA = holo-[ACP] + adenosine 3',5'-bisphosphate + H(+). Transfers the 4'-phosphopantetheine moiety from coenzyme A to a Ser of acyl-carrier-protein. In Leptospira interrogans serogroup Icterohaemorrhagiae serovar copenhageni (strain Fiocruz L1-130), this protein is Holo-[acyl-carrier-protein] synthase.